Here is a 596-residue protein sequence, read N- to C-terminus: Probable translation initiation factor IF-2 (596 aa).

Residues 3-220 (IRSPIVSVLG…MLLGLAQEYL (218 aa)) enclose the tr-type G domain. The tract at residues 12 to 19 (GHVDHGKT) is G1. 12 to 19 (GHVDHGKT) lines the GTP pocket. Positions 37-41 (GITQH) are G2. The segment at 76–79 (DTPG) is G3. GTP-binding positions include 76–80 (DTPGH) and 130–133 (NKID). Residues 130–133 (NKID) form a G4 region. A G5 region spans residues 198-200 (SAK).

This sequence belongs to the TRAFAC class translation factor GTPase superfamily. Classic translation factor GTPase family. IF-2 subfamily.

In terms of biological role, function in general translation initiation by promoting the binding of the formylmethionine-tRNA to ribosomes. Seems to function along with eIF-2. The chain is Probable translation initiation factor IF-2 from Methanobrevibacter smithii (strain ATCC 35061 / DSM 861 / OCM 144 / PS).